A 161-amino-acid polypeptide reads, in one-letter code: Anthrone oxygenase tpcL (161 aa).

Asn-4 is a glycosylation site (N-linked (GlcNAc...) asparagine). Transmembrane regions (helical) follow at residues 15 to 35 (VITG…DIPV), 56 to 74 (IGHK…LYGY), 87 to 107 (LPHI…WLVM), and 136 to 155 (WAQL…VLGL).

This sequence belongs to the anthrone oxygenase family. In terms of tissue distribution, specifically expressed in conidia.

It localises to the membrane. The catalysed reaction is emodin anthrone + O2 = emodin + H2O + H(+). Its pathway is secondary metabolite biosynthesis. Anthrone oxygenase; part of the gene cluster that mediates the biosynthesis of trypacidin, a mycotoxin with antiprotozoal activity and that plays a role in the infection process. The pathway begins with the synthesis of atrochrysone thioester by the polyketide synthase (PKS) tpcC. The atrochrysone carboxyl ACP thioesterase tpcB then breaks the thioester bond and releases the atrochrysone carboxylic acid from tpcC. The decarboxylase tpcK converts atrochrysone carboxylic acid to atrochrysone which is further reduced into emodin anthrone. The next step is performed by the emodin anthrone oxygenase tpcL that catalyzes the oxidation of emodinanthrone to emodin. Emodin O-methyltransferase encoded by tpcA catalyzes methylation of the 8-hydroxy group of emodin to form questin. Ring cleavage of questin by questin oxidase tpcI leads to desmethylsulochrin via several intermediates including questin epoxide. Another methylation step catalyzed by tpcM leads to the formation of sulochrin which is further converted to monomethylsulfochrin by tpcH. Finally, the tpcJ catalyzes the conversion of monomethylsulfochrin to trypacidin. Trypacidin is toxic for human pulmonary and bronchial epithelial cells by initiating the intracellular formation of nitric oxide (NO) and hydrogen peroxide (H(2)O(2)), thus triggering host necrotic cell death. The trypacidin pathway is also able to produce endocrocin via a distinct route from the endocrocin Enc pathway. The polypeptide is Anthrone oxygenase tpcL (Aspergillus fumigatus (strain ATCC MYA-4609 / CBS 101355 / FGSC A1100 / Af293) (Neosartorya fumigata)).